We begin with the raw amino-acid sequence, 299 residues long: Biotin transporter (299 aa).

Helical transmembrane passes span 2–22 (ALLI…GEYL), 26–46 (VDSY…FLPF), 56–76 (TISL…MLSF), 81–101 (YLTV…ITLI), 110–130 (LRWG…IIRY), 137–157 (FWVG…GMVG), 172–192 (AFAW…SLLG), 202–222 (LQWS…YFMW), 233–253 (TLGI…LAIW), and 256–276 (QPHW…LWVH). EamA domains follow at residues 3 to 128 (LLII…AGII) and 139 to 274 (VGLL…ASLW).

The protein belongs to the drug/metabolite transporter (DMT) superfamily. 10 TMS drug/metabolite exporter (DME) (TC 2.A.7.3) family.

The protein localises to the cell inner membrane. The enzyme catalyses biotin(in) = biotin(out). Its function is as follows. Uptake of biotin. This is Biotin transporter from Salmonella typhi.